A 117-amino-acid chain; its full sequence is MAANNLAKIQFYEGTNEPVVPEIRLTRGNDGTTGQAIFIFEKPQALSSITEGEITGMRMIDSEGEIMTREVKVKFVDGEPMYLEGTYIWKTKSDFDRFMRFANSYAKSNGLGYSEKK.

This sequence belongs to the Psb28 family. As to quaternary structure, part of the photosystem II complex.

The protein resides in the cellular thylakoid membrane. This Prochlorococcus marinus (strain MIT 9515) protein is Photosystem II reaction center Psb28 protein.